Reading from the N-terminus, the 201-residue chain is E3 ubiquitin-protein ligase MIR1 (201 aa).

The RING-CH-type zinc finger occupies 1–58 (MDSTGEFCWICHQPEGPLKRFCGCKGSCAVSHQDCLRGWLETSRRQTCALCGTPYSMK). Topologically, residues 1–81 (MDSTGEFCWI…EEVLAAMEAC (81 aa)) are cytoplasmic. The Zn(2+) site is built by cysteine 8, cysteine 11, cysteine 22, cysteine 24, histidine 32, cysteine 35, cysteine 48, and cysteine 51. The interval 52–79 (GTPYSMKWKTKPLREWTWGEEEVLAAME) is DIRT. The chain crosses the membrane as a helical span at residues 82-102 (LPLVLIPLAVLMIVMGTWLLV). Residues 103-113 (NHNGFLSPRMQ) are Extracellular-facing. Residues 114-134 (VVLVVIVLLAMIVFSASASYV) traverse the membrane as a helical segment. Residues 135 to 201 (MVEGPGCLDT…RLGCVRLCCV (67 aa)) are Cytoplasmic-facing.

In terms of assembly, interacts with host UBE2J2.

It is found in the host endoplasmic reticulum membrane. The enzyme catalyses [E2 ubiquitin-conjugating enzyme]-S-ubiquitinyl-L-cysteine + [acceptor protein]-L-cysteine = [E2 ubiquitin-conjugating enzyme]-L-cysteine + [acceptor protein]-S-ubiquitinyl-L-cysteine.. The protein operates within protein modification; protein ubiquitination. E3 ubiquitin-protein ligase that mediates ubiquitination of host surface class I (MHC-I) H-2D(b)/H2-D1 and H-2K(b)/H2-K1 molecules before they exit the endoplasmic reticulum, leading to their degradation by the endoplasmic reticulum-associated degradation (ERAD) system, thus blocking the immune detection of virus-infected cells. Mediates ubiquitination of lysine, as well as serine and threonine residues present in the cytoplasmic tail of surface class I molecules. Promotes ubiquitination of hydroxylated serine or threonine residues via ester bonds instead of the classical isopeptide linkage. This Murid herpesvirus 4 (MuHV-4) protein is E3 ubiquitin-protein ligase MIR1 (K3).